Consider the following 179-residue polypeptide: Interleukin-22 (179 aa).

An N-terminal signal peptide occupies residues 1 to 33 (MAALQKSVSSFLMGTLATSCLLLLALLVQGGAA). Disulfide bonds link C40–C132 and C89–C178. Residues N54, N68, and N97 are each glycosylated (N-linked (GlcNAc...) asparagine).

Belongs to the IL-10 family.

It localises to the secreted. Cytokine that plays a critical role in modulating tissue responses during inflammation. Plays an essential role in the regeneration of epithelial cells to maintain barrier function after injury and for the prevention of further tissue damage. Unlike most of the cytokines, has no effect on immune cells. Signals through a heterodimeric receptor composed of two subunits, the specific receptor IL22RA1 which is present on non-immune cells in many organs and the shared subunit IL10RB. Ligation of IL22RA1 with IL22 induces activation of the tyrosine kinases JAK1 and TYK2, which in turn activates STAT3. In turn, promotes cell survival and proliferation through STAT3, ERK1/2 and PI3K/AKT pathways. Promotes phosphorylation of GSK3B at 'Ser-9' and CTTN. Promotes epithelial cell spreading. This Homo sapiens (Human) protein is Interleukin-22 (IL22).